A 259-amino-acid chain; its full sequence is MAFHKPEQIAELVIEAGVQKVSQTLPAMLILGFLGGAFISLGFLLNIRVLGNLPERWGSLVNVLGGAVFPVGLMLVVLAGGELITGNMMSLSMALYAKKITLVSVLNNWVWITFMNFVGAIFVAYCFGHLGGLTEGDYLNKTVAIAEGKLHESFGRTLILAIGCNWLVCLALWLAYGTSDFVGKIIGIWIPIMAFVVIGFQQVVANMFVISAVIFAGHLTWMDLARNFVPVFIGNVIGGAGFVGFAYFACYQKQHSNMK.

Residues 1-26 (MAFHKPEQIAELVIEAGVQKVSQTLP) are Cytoplasmic-facing. A helical transmembrane segment spans residues 27–47 (AMLILGFLGGAFISLGFLLNI). The Periplasmic portion of the chain corresponds to 48 to 66 (RVLGNLPERWGSLVNVLGG). A helical membrane pass occupies residues 67-97 (AVFPVGLMLVVLAGGELITGNMMSLSMALYA). The Cytoplasmic segment spans residues 98–108 (KKITLVSVLNN). Residues 109 to 130 (WVWITFMNFVGAIFVAYCFGHL) traverse the membrane as a helical segment. The Periplasmic segment spans residues 131 to 157 (GGLTEGDYLNKTVAIAEGKLHESFGRT). A helical membrane pass occupies residues 158–176 (LILAIGCNWLVCLALWLAY). Residues 177–187 (GTSDFVGKIIG) lie on the Cytoplasmic side of the membrane. Residues 188-216 (IWIPIMAFVVIGFQQVVANMFVISAVIFA) form a helical membrane-spanning segment. The Periplasmic segment spans residues 217-227 (GHLTWMDLARN). The helical transmembrane segment at 228–250 (FVPVFIGNVIGGAGFVGFAYFAC) threads the bilayer. At 251–259 (YQKQHSNMK) the chain is on the cytoplasmic side.

Belongs to the FNT transporter (TC 1.A.16) family.

It is found in the cell inner membrane. The catalysed reaction is formate(in) = formate(out). Its function is as follows. Acts as a formate transporter. This Bacillus thuringiensis protein is Formate channel BtFdhC.